A 389-amino-acid polypeptide reads, in one-letter code: Dual-specificity RNA methyltransferase RlmN (389 aa).

Glu110 acts as the Proton acceptor in catalysis. In terms of domain architecture, Radical SAM core spans 116 to 355 (EKDRATLCVS…TIVRKTRGDD (240 aa)). Cys123 and Cys360 are oxidised to a cystine. [4Fe-4S] cluster contacts are provided by Cys130, Cys134, and Cys137. S-adenosyl-L-methionine is bound by residues 184–185 (GE), Ser216, 238–240 (SLH), and Asn317. The active-site S-methylcysteine intermediate is Cys360.

It belongs to the radical SAM superfamily. RlmN family. [4Fe-4S] cluster is required as a cofactor.

The protein localises to the cytoplasm. It carries out the reaction adenosine(2503) in 23S rRNA + 2 reduced [2Fe-2S]-[ferredoxin] + 2 S-adenosyl-L-methionine = 2-methyladenosine(2503) in 23S rRNA + 5'-deoxyadenosine + L-methionine + 2 oxidized [2Fe-2S]-[ferredoxin] + S-adenosyl-L-homocysteine. The enzyme catalyses adenosine(37) in tRNA + 2 reduced [2Fe-2S]-[ferredoxin] + 2 S-adenosyl-L-methionine = 2-methyladenosine(37) in tRNA + 5'-deoxyadenosine + L-methionine + 2 oxidized [2Fe-2S]-[ferredoxin] + S-adenosyl-L-homocysteine. Its function is as follows. Specifically methylates position 2 of adenine 2503 in 23S rRNA and position 2 of adenine 37 in tRNAs. m2A2503 modification seems to play a crucial role in the proofreading step occurring at the peptidyl transferase center and thus would serve to optimize ribosomal fidelity. The protein is Dual-specificity RNA methyltransferase RlmN of Erwinia tasmaniensis (strain DSM 17950 / CFBP 7177 / CIP 109463 / NCPPB 4357 / Et1/99).